Here is a 37-residue protein sequence, read N- to C-terminus: Esculentin-2A (37 aa).

Residues Cys31 and Cys37 are joined by a disulfide bond.

This sequence belongs to the frog skin active peptide (FSAP) family. Esculentin subfamily. As to expression, expressed by the skin glands.

The protein localises to the secreted. Shows antibacterial activity against representative Gram-negative and Gram-positive bacterial species, and hemolytic activity. The polypeptide is Esculentin-2A (Pelophylax lessonae (Pool frog)).